Here is a 256-residue protein sequence, read N- to C-terminus: Homeobox protein TGIF2LX (256 aa).

Residues Met1 to Ser45 form a disordered region. Residues Ala9–Pro34 are compositionally biased toward basic and acidic residues. Residues Ala35 to Ser45 are compositionally biased toward polar residues. Positions Glu62–Asp125 form a DNA-binding region, homeobox; TALE-type. The tract at residues Val136 to Glu224 is disordered. Residues Asp166 to Gly179 show a composition bias toward polar residues. Low complexity predominate over residues Val209 to Glu224.

The protein belongs to the TALE/TGIF homeobox family.

Its subcellular location is the nucleus. In terms of biological role, may have a transcription role in testis. The polypeptide is Homeobox protein TGIF2LX (TGIF2LX) (Papio hamadryas (Hamadryas baboon)).